Here is a 481-residue protein sequence, read N- to C-terminus: RAC-beta serine/threonine-protein kinase (481 aa).

At Met-1 the chain carries N-acetylmethionine. The region spanning 5–108 (SVIKEGWLHK…WMRAIQMVAN (104 aa)) is the PH domain. Ser-34 bears the Phosphoserine mark. Cys-60 and Cys-77 are oxidised to a cystine. Ser-126 is modified (phosphoserine). Ser-128 and Ser-131 each carry an O-linked (GlcNAc) serine glycan. The Protein kinase domain occupies 152–409 (FDYLKLLGKG…AKEVMEHRFF (258 aa)). ATP contacts are provided by residues 158–166 (LGKGTFGKV) and Lys-181. The Proton acceptor role is filled by Asp-275. Mn(2+) contacts are provided by Asn-280 and Asp-293. A disulfide bond links Cys-297 and Cys-311. Thr-306 carries O-linked (GlcNAc) threonine glycosylation. Residue Thr-309 is modified to Phosphothreonine; by PDPK1. O-linked (GlcNAc) threonine glycosylation is present at Thr-313. Positions 410 to 481 (LSINWQDVVQ…QFSYSASIRE (72 aa)) constitute an AGC-kinase C-terminal domain. Position 447 is a phosphoserine (Ser-447). Thr-451 is subject to Phosphothreonine. Phosphoserine; by MTOR is present on residues Ser-474 and Ser-478. Ser-474 carries O-linked (GlcNAc) serine; alternate glycosylation.

Belongs to the protein kinase superfamily. AGC Ser/Thr protein kinase family. RAC subfamily. As to quaternary structure, interacts with BTBD10. Interacts with KCTD20. Interacts (via PH domain) with MTCP1, TCL1A and TCL1B; this interaction may facilitate AKT2 oligomerization and phosphorylation, hence increasing kinase activity. Interacts with PHB2; this interaction may be important for myogenic differentiation. Interacts (when phosphorylated) with CLIP3/ClipR-59; this interaction promotes cell membrane localization. Interacts with WDFY2 (via WD repeats 1-3). Phosphorylation on Thr-309 and Ser-474 is required for full activity. Phosphorylation of the activation loop at Thr-309 by PDPK1/PDK1 is a prerequisite for full activation. Phosphorylated and activated by PDPK1/PDK1 in the presence of phosphatidylinositol 3,4,5-trisphosphate. Phosphorylation by mTORC2 in response to growth factors plays a key role in AKT1 activation: mTORC2 phosphorylates different sites depending on the context, such as Ser-474 or Ser-478, thereby facilitating subsequent phosphorylation of the activation loop by PDPK1/PDK1. Post-translationally, ubiquitinated; undergoes both 'Lys-48'- and 'Lys-63'-linked polyubiquitination. TRAF6-induced 'Lys-63'-linked AKT2 ubiquitination. When fully phosphorylated and translocated into the nucleus, undergoes 'Lys-48'-polyubiquitination catalyzed by TTC3, leading to its degradation by the proteasome. In terms of processing, O-GlcNAcylation at Thr-306 and Thr-313 inhibits activating phosphorylation at Thr-309 via disrupting the interaction between AKT and PDPK1/PDK1.

The protein resides in the cytoplasm. It is found in the nucleus. Its subcellular location is the cell membrane. It localises to the early endosome. It carries out the reaction L-seryl-[protein] + ATP = O-phospho-L-seryl-[protein] + ADP + H(+). The enzyme catalyses L-threonyl-[protein] + ATP = O-phospho-L-threonyl-[protein] + ADP + H(+). With respect to regulation, two specific sites, one in the kinase domain (Thr-309) and the other in the C-terminal regulatory region (Ser-474), need to be phosphorylated for its full activation. AKT2 phosphorylation of PKP1 is induced by insulin. Inhibited by Akt inhibitor MK2206. AKT2 is one of 3 closely related serine/threonine-protein kinases (AKT1, AKT2 and AKT3) called the AKT kinases, and which regulate many processes including metabolism, proliferation, cell survival, growth and angiogenesis. This is mediated through serine and/or threonine phosphorylation of a range of downstream substrates. Over 100 substrate candidates have been reported so far, but for most of them, no isoform specificity has been reported. AKT is responsible of the regulation of glucose uptake by mediating insulin-induced translocation of the SLC2A4/GLUT4 glucose transporter to the cell surface. Phosphorylation of PTPN1 at 'Ser-50' negatively modulates its phosphatase activity preventing dephosphorylation of the insulin receptor and the attenuation of insulin signaling. Phosphorylation of TBC1D4 triggers the binding of this effector to inhibitory 14-3-3 proteins, which is required for insulin-stimulated glucose transport. AKT also regulates the storage of glucose in the form of glycogen by phosphorylating GSK3A at 'Ser-21' and GSK3B at 'Ser-9', resulting in inhibition of its kinase activity. Phosphorylation of GSK3 isoforms by AKT is also thought to be one mechanism by which cell proliferation is driven. AKT also regulates cell survival via the phosphorylation of MAP3K5 (apoptosis signal-related kinase). Phosphorylation of 'Ser-83' decreases MAP3K5 kinase activity stimulated by oxidative stress and thereby prevents apoptosis. AKT mediates insulin-stimulated protein synthesis by phosphorylating TSC2 at 'Ser-939' and 'Thr-1462', thereby activating mTORC1 signaling and leading to both phosphorylation of 4E-BP1 and in activation of RPS6KB1. AKT is involved in the phosphorylation of members of the FOXO factors (Forkhead family of transcription factors), leading to binding of 14-3-3 proteins and cytoplasmic localization. In particular, FOXO1 is phosphorylated at 'Thr-24', 'Ser-256' and 'Ser-319'. FOXO3 and FOXO4 are phosphorylated on equivalent sites. AKT has an important role in the regulation of NF-kappa-B-dependent gene transcription and positively regulates the activity of CREB1 (cyclic AMP (cAMP)-response element binding protein). The phosphorylation of CREB1 induces the binding of accessory proteins that are necessary for the transcription of pro-survival genes such as BCL2 and MCL1. AKT phosphorylates 'Ser-454' on ATP citrate lyase (ACLY), thereby potentially regulating ACLY activity and fatty acid synthesis. Activates the 3B isoform of cyclic nucleotide phosphodiesterase (PDE3B) via phosphorylation of 'Ser-273', resulting in reduced cyclic AMP levels and inhibition of lipolysis. Phosphorylates PIKFYVE on 'Ser-318', which results in increased PI(3)P-5 activity. The Rho GTPase-activating protein DLC1 is another substrate and its phosphorylation is implicated in the regulation cell proliferation and cell growth. AKT plays a role as key modulator of the AKT-mTOR signaling pathway controlling the tempo of the process of newborn neurons integration during adult neurogenesis, including correct neuron positioning, dendritic development and synapse formation. Signals downstream of phosphatidylinositol 3-kinase (PI(3)K) to mediate the effects of various growth factors such as platelet-derived growth factor (PDGF), epidermal growth factor (EGF), insulin and insulin-like growth factor I (IGF-I). AKT mediates the antiapoptotic effects of IGF-I. Essential for the SPATA13-mediated regulation of cell migration and adhesion assembly and disassembly. May be involved in the regulation of the placental development. In response to lysophosphatidic acid stimulation, inhibits the ciliogenesis cascade. In this context, phosphorylates WDR44, hence stabilizing its interaction with Rab11 and preventing the formation of the ciliogenic Rab11-FIP3-RAB3IP complex. Also phosphorylates RAB3IP/Rabin8, thus may affect RAB3IP guanine nucleotide exchange factor (GEF) activity toward Rab8, which is important for cilia growth. Phosphorylates PKP1, facilitating its interaction with YWHAG and translocation to the nucleus, ultimately resulting in a reduction in keratinocyte intercellular adhesion. Phosphorylation of PKP1 increases PKP1 protein stability, translocation to the cytoplasm away from desmosome plaques and PKP1-driven cap-dependent translation. Functionally, several AKT2-specific substrates have been identified, including ANKRD2, C2CD5, CLK2 and PITX2. May play a role in myoblast differentiation. In this context, may act through PITX2 phosphorylation. Unphosphorylated PITX2 associates with an ELAVL1/HuR-containing complex, which stabilizes cyclin mRNA and ensuring cell proliferation. Phosphorylation by AKT2 impairs this association, leading to CCND1 mRNA destabilization and progression towards differentiation. Also involved in the negative regulation of myogenesis in response to stress conditions. In this context, acts by phosphorylating ANKRD2. May also be a key regulator of glucose uptake. Regulates insulin-stimulated glucose transport by the increase of glucose transporter GLUT4 translocation from intracellular stores to the plasma membrane. In this context, acts by phosphorylating C2CD5/CDP138 on 'Ser-197' in insulin-stimulated adipocytes. Through the phosphorylation of CLK2 on 'Thr-343', involved in insulin-regulated suppression of hepatic gluconeogenesis. This is RAC-beta serine/threonine-protein kinase (Akt2) from Mus musculus (Mouse).